Consider the following 656-residue polypeptide: Exoribonuclease 2 (656 aa).

The RNB domain occupies 190 to 518; the sequence is RSDLTKTPFF…LNHRLIKSVL (329 aa). The region spanning 564-649 is the S1 motif domain; sequence KWRYKAEIFD…ESGQLIGKLA (86 aa).

The protein belongs to the RNR ribonuclease family. RNase II subfamily.

The protein localises to the cytoplasm. It catalyses the reaction Exonucleolytic cleavage in the 3'- to 5'-direction to yield nucleoside 5'-phosphates.. Its function is as follows. Involved in mRNA degradation. Hydrolyzes single-stranded polyribonucleotides processively in the 3' to 5' direction. The protein is Exoribonuclease 2 of Psychromonas ingrahamii (strain DSM 17664 / CCUG 51855 / 37).